The primary structure comprises 33 residues: U-limacoditoxin(13)-As11 (33 aa).

An N-terminal signal peptide occupies residues Met-1–Ala-19. Residue Phe-32 is modified to Phenylalanine amide.

It belongs to the FARP (FMRFamide related peptide) family. In terms of tissue distribution, expressed by the venom secretory cell of the spine. The spine is a cuticular structure containing a single large nucleated venom-secreting cell at its base. It is an independent unit capable of producing, storing and injecting venom. On the back of A.stimulea caterpillars, spines are grouped together by 50 to 100 to form scoli, of which there are eight.

The protein localises to the secreted. In terms of biological role, is toxic when injected into Drosophila melanogaster. Also shows a low anthelmintic activity against the parasitic nematode H.contortus (drug susceptible Kirby isolate). The chain is U-limacoditoxin(13)-As11 from Acharia stimulea (Saddleback caterpillar moth).